Reading from the N-terminus, the 447-residue chain is Trichothecene C-3 esterase (447 aa).

The signal sequence occupies residues 1 to 22 (MALNRLVFSLSLWLGFIGAAQA). 4 N-linked (GlcNAc...) asparagine glycosylation sites follow: Asn-59, Asn-66, Asn-136, and Asn-189. The active-site Charge relay system is the Ser-202. Asn-238, Asn-284, and Asn-314 each carry an N-linked (GlcNAc...) asparagine glycan. Catalysis depends on charge relay system residues Asp-352 and His-384. N-linked (GlcNAc...) asparagine glycosylation is found at Asn-389 and Asn-423.

The protein belongs to the AB hydrolase superfamily. Lipase family.

The protein operates within sesquiterpene biosynthesis; trichothecene biosynthesis. In terms of biological role, trichothecene C-3 esterase; part of the core gene cluster that mediates the biosynthesis of trichothecenes, a very large family of chemically related bicyclic sesquiterpene compounds acting as mycotoxins, including T2-toxin. The biosynthesis of trichothecenes begins with the cyclization of farnesyl diphosphate to trichodiene and is catalyzed by the trichodiene synthase TRI5. Trichodiene undergoes a series of oxygenations catalyzed by the cytochrome P450 monooxygenase TRI4. TRI4 controls the addition of four oxygens at C-2, C-3, C-11, and the C-12, C-13-epoxide to form the intermediate isotrichotriol. Isotrichotriol then undergoes a non-enzymatic isomerization and cyclization to form isotrichodermol. During this process, the oxygen at the C-2 position becomes the pyran ring oxygen and the hydroxyl group at C-11 is lost. More complex type A trichothecenes are built by modifying isotrichodermol through a series of paired hydroxylation and acetylation or acylation steps. Isotrichodermol is converted to isotrichodermin by the acetyltransferase TRI101. TRI101 encodes a C-3 transacetylase that acts as a self-protection or resistance factor during biosynthesis and that the presence of a free C-3 hydroxyl group is a key component of Fusarium trichothecene phytotoxicity. A second hydroxyl group is added to C-15 by the trichothecene C-15 hydroxylase TRI11, producing 15-decalonectrin, which is then acetylated by TRI3, producing calonectrin. A third hydroxyl group is added at C-4 by the cytochrome P450 monooxygenase TRI13, converting calonectrin to 3,15-diacetoxyspirpenol, which is subsequently acetylated by the acetyltransferase TRI7. A fourth hydroxyl group is added to C-8 by the cytochrome P450 monooxygenase TRI1, followed by the addition of an isovaleryl moiety by TRI16. Finally, the acetyl group is removed from the C-3 position by the trichothecene C-3 esterase TRI8 to produce T-2 toxin. This chain is Trichothecene C-3 esterase, found in Fusarium sporotrichioides.